Here is a 465-residue protein sequence, read N- to C-terminus: Phospholipase A1-II 5 (465 aa).

S233 (acyl-ester intermediate) is an active-site residue. Residues S233, D297, and H336 each act as charge relay system in the active site.

The protein belongs to the AB hydrolase superfamily. Lipase family.

Its subcellular location is the cytoplasm. In terms of biological role, acylhydrolase that catalyzes the hydrolysis of phospholipids at the sn-1 position. This chain is Phospholipase A1-II 5, found in Oryza sativa subsp. indica (Rice).